Consider the following 347-residue polypeptide: MKVLGLETSCDETGLAIFDSELLAEGKNGLLGQVLYSQIELHATYGGVVPELASRDHIRKLVPLLDELLAQCDISKDEIDAIAYTKGPGLIGALMTGALFGRSLAYGLDVPAIGIHHMEGHLLSPLLGPNPPKFPFVSLLVSGGHTLLVAAHGIGEYEILGESIDDAAGECFDKAAKMLGLPYPGGPNVARLAEQGDPLKYELPRPMLHRGLDFSFSGMKTAVHNLIKDTPGSDNDEQVRADIAASFQHAVVDTLVKKCVKALKQTGMKQLVIAGGVSANLHLRQTLEQQLAKIGATVHYAPLELCTDNGAMIAYAGYQRLQAGQQDALSVSCVPRWNISDLPALAQ.

Fe cation-binding residues include His-117 and His-121. Residues 140–144 (LVSGG), Asp-173, Gly-186, and Asn-280 each bind substrate. A Fe cation-binding site is contributed by Asp-308.

Belongs to the KAE1 / TsaD family. Requires Fe(2+) as cofactor.

It localises to the cytoplasm. It carries out the reaction L-threonylcarbamoyladenylate + adenosine(37) in tRNA = N(6)-L-threonylcarbamoyladenosine(37) in tRNA + AMP + H(+). Its function is as follows. Required for the formation of a threonylcarbamoyl group on adenosine at position 37 (t(6)A37) in tRNAs that read codons beginning with adenine. Is involved in the transfer of the threonylcarbamoyl moiety of threonylcarbamoyl-AMP (TC-AMP) to the N6 group of A37, together with TsaE and TsaB. TsaD likely plays a direct catalytic role in this reaction. In Psychrobacter sp. (strain PRwf-1), this protein is tRNA N6-adenosine threonylcarbamoyltransferase.